The chain runs to 115 residues: NADH-ubiquinone oxidoreductase chain 3 (115 aa).

3 consecutive transmembrane segments (helical) span residues 4–24 (IVILFINATLSLGLITVAFWL), 55–75 (FFLIGITFLLFDLEITLLLPL), and 84–104 (TYFTMLVSFLLVSVLALGLMY).

The protein belongs to the complex I subunit 3 family. In terms of assembly, core subunit of respiratory chain NADH dehydrogenase (Complex I) which is composed of 45 different subunits. Interacts with TMEM186. Interacts with TMEM242.

The protein localises to the mitochondrion inner membrane. The catalysed reaction is a ubiquinone + NADH + 5 H(+)(in) = a ubiquinol + NAD(+) + 4 H(+)(out). Core subunit of the mitochondrial membrane respiratory chain NADH dehydrogenase (Complex I) which catalyzes electron transfer from NADH through the respiratory chain, using ubiquinone as an electron acceptor. Essential for the catalytic activity of complex I. The sequence is that of NADH-ubiquinone oxidoreductase chain 3 from Eligmodontia typus (Highland gerbil mouse).